Here is a 973-residue protein sequence, read N- to C-terminus: E3 ubiquitin-protein ligase BRE1A (973 aa).

Residues 1–37 (MSGIGNKRAAGEPGTSMPPEKKTAVEDSGTTVETIKL) form a disordered region. N6-acetyllysine is present on Lys-21. Ser-41 carries the phosphoserine modification. Positions 43-90 (TEELDIRTLQSKNRKLAEMLDQRQAIEDELREHIEKLERRQATDDASL) form a coiled coil. The segment at 128 to 153 (VVPEPEPDSDSNQERKDDRERGDGQE) is disordered. Residues Ser-136 and Ser-138 each carry the phosphoserine modification. The span at 139–151 (NQERKDDRERGDG) shows a compositional bias: basic and acidic residues. Coiled-coil stretches lie at residues 168 to 378 (EEME…VKET) and 429 to 896 (SLHK…TTKK). N6-acetyllysine occurs at positions 348 and 510. Residues 507 to 620 (DLNKTRLRSG…GKHDDGRKKE (114 aa)) are disordered. Ser-522 is modified (phosphoserine). 2 stretches are compositionally biased toward basic and acidic residues: residues 527 to 544 (EDPK…EDLA) and 553 to 620 (SQED…RKKE). Ser-560 bears the Phosphoserine mark. Residues 920–959 (CPCCNMRKKDAVLTKCFHVFCFECVKTRYDTRQRKCPKCN) form an RING-type zinc finger.

It belongs to the BRE1 family. As to quaternary structure, component of the RNF20/40 complex (also known as BRE1 complex) probably composed of 2 copies of RNF20/BRE1A and 2 copies of RNF40/BRE1B. Interacts with UBE2E1/UBCH6. Interacts with p53/TP53 and WAC. Interacts with PAF1; the interaction mediates the association of the PAF1 and RNF20/40 complexes which is a prerequsite for recruitment of UBE2A/B. Interacts with PA2G4. Interacts with FBXL19.

It localises to the nucleus. The enzyme catalyses S-ubiquitinyl-[E2 ubiquitin-conjugating enzyme]-L-cysteine + [acceptor protein]-L-lysine = [E2 ubiquitin-conjugating enzyme]-L-cysteine + N(6)-ubiquitinyl-[acceptor protein]-L-lysine.. The protein operates within protein modification; protein ubiquitination. Component of the RNF20/40 E3 ubiquitin-protein ligase complex that mediates monoubiquitination of 'Lys-120' of histone H2B (H2BK120ub1). H2BK120ub1 gives a specific tag for epigenetic transcriptional activation and is also prerequisite for histone H3 'Lys-4' and 'Lys-79' methylation (H3K4me and H3K79me, respectively). It thereby plays a central role in histone code and gene regulation. The RNF20/40 complex forms a H2B ubiquitin ligase complex in cooperation with the E2 enzyme UBE2A or UBE2B; reports about the cooperation with UBE2E1/UBCH are contradictory. Required for transcriptional activation of Hox genes. Recruited to the MDM2 promoter, probably by being recruited by p53/TP53, and thereby acts as a transcriptional coactivator. Mediates the polyubiquitination of PA2G4 leading to its proteasome-mediated degradation. The chain is E3 ubiquitin-protein ligase BRE1A (Rnf20) from Mus musculus (Mouse).